Consider the following 510-residue polypeptide: Fumarate hydratase, mitochondrial (510 aa).

Residues 1–44 (MYRALWLLARSRRLVRPPASALASAPGLSGAAVPSFWPPNAARM) constitute a mitochondrion transit peptide. N6-acetyllysine; alternate is present on residues Lys-61, Lys-66, and Lys-80. N6-succinyllysine; alternate is present on residues Lys-61, Lys-66, and Lys-80. Phosphothreonine occurs at positions 85 and 90. The residue at position 94 (Lys-94) is an N6-acetyllysine. An N6-acetyllysine; alternate mark is found at Lys-115 and Lys-122. An N6-succinyllysine; alternate mark is found at Lys-115 and Lys-122. Substrate-binding positions include 145-147 (SGT), 176-179 (HPND), and 186-188 (SSN). Residue Lys-213 is modified to N6-acetyllysine. Lys-223 bears the N6-acetyllysine; alternate mark. Lys-223 carries the N6-succinyllysine; alternate modification. Substrate is bound at residue Thr-234. His-235 acts as the Proton donor/acceptor in catalysis. Residue Thr-236 is modified to Phosphothreonine. Lys-256 is subject to N6-acetyllysine. At Lys-292 the chain carries N6-acetyllysine; alternate. Lys-292 is subject to N6-succinyllysine; alternate. Ser-365 is a catalytic residue. Substrate-binding positions include Ser-366 and 371–373 (KVN). Position 366 is a phosphoserine (Ser-366). 2 positions are modified to N6-succinyllysine: Lys-467 and Lys-473. Lys-502 carries the post-translational modification N6-acetyllysine.

The protein belongs to the class-II fumarase/aspartase family. Fumarase subfamily. As to quaternary structure, homotetramer. Interacts with H2AZ1. In terms of processing, phosphorylation at Thr-236 by PRKDC in response to DNA damage promotes translocation to the nucleus and recruitment to DNA double-strand breaks (DSBs).

The protein localises to the mitochondrion. It is found in the cytoplasm. Its subcellular location is the cytosol. The protein resides in the nucleus. It localises to the chromosome. The enzyme catalyses (S)-malate = fumarate + H2O. Its pathway is carbohydrate metabolism; tricarboxylic acid cycle; (S)-malate from fumarate: step 1/1. Functionally, catalyzes the reversible stereospecific interconversion of fumarate to L-malate. Experiments in other species have demonstrated that specific isoforms of this protein act in defined pathways and favor one direction over the other. Its function is as follows. Catalyzes the hydration of fumarate to L-malate in the tricarboxylic acid (TCA) cycle to facilitate a transition step in the production of energy in the form of NADH. Catalyzes the dehydration of L-malate to fumarate. Fumarate metabolism in the cytosol plays a role during urea cycle and arginine metabolism; fumarate being a by-product of the urea cycle and amino-acid catabolism. Also plays a role in DNA repair by promoting non-homologous end-joining (NHEJ). In response to DNA damage and phosphorylation by PRKDC, translocates to the nucleus and accumulates at DNA double-strand breaks (DSBs): acts by catalyzing formation of fumarate, an inhibitor of KDM2B histone demethylase activity, resulting in enhanced dimethylation of histone H3 'Lys-36' (H3K36me2). The chain is Fumarate hydratase, mitochondrial from Macaca fascicularis (Crab-eating macaque).